Reading from the N-terminus, the 74-residue chain is Cytochrome c oxidase assembly factor 5 (74 aa).

In terms of domain architecture, CHCH spans 27–65; the sequence is QSDCVVQEGKSPRQCLKEGYCNSLKYAFFECKRSVLDNR. A Cx10C motif motif is present at residues 30 to 41; that stretch reads CVVQEGKSPRQC. 2 disulfide bridges follow: C30/C57 and C41/C47. S37 bears the Phosphoserine mark. The short motif at 47–57 is the Cx9C motif element; sequence CNSLKYAFFEC.

This sequence belongs to the PET191 family.

Involved in an early step of the mitochondrial complex IV assembly process. The chain is Cytochrome c oxidase assembly factor 5 (COA5) from Homo sapiens (Human).